A 151-amino-acid chain; its full sequence is ALK and LTK ligand 2 (151 aa).

A signal peptide spans Met-1–Ala-25. Disulfide bonds link Cys-112-Cys-148 and Cys-126-Cys-135.

It belongs to the ALKAL family. Homodimer.

It localises to the secreted. The protein resides in the cell membrane. Its function is as follows. Cytokine that acts as a physiological ligand for receptor tyrosine kinases LTK and ALK, leading to their activation. Cytokine-binding is sufficient to activate LTK. In contrast, ALKAL2-driven activation of ALK is coupled with heparin-binding to ALK. Stimulation of ALK signaling is involved in neural development and regulation of energy expenditure. This chain is ALK and LTK ligand 2, found in Mus musculus (Mouse).